The sequence spans 123 residues: Large ribosomal subunit protein bL12 (123 aa).

The protein belongs to the bacterial ribosomal protein bL12 family. Homodimer. Part of the ribosomal stalk of the 50S ribosomal subunit. Forms a multimeric L10(L12)X complex, where L10 forms an elongated spine to which 2 to 4 L12 dimers bind in a sequential fashion. Binds GTP-bound translation factors.

In terms of biological role, forms part of the ribosomal stalk which helps the ribosome interact with GTP-bound translation factors. Is thus essential for accurate translation. The sequence is that of Large ribosomal subunit protein bL12 from Zymomonas mobilis subsp. mobilis (strain ATCC 31821 / ZM4 / CP4).